We begin with the raw amino-acid sequence, 613 residues long: Proteasome-associated ATPase (613 aa).

The disordered stretch occupies residues 1–29 (MSESERSEGFPEGFAGAGSGSLSSEDAAE). Residues 23 to 100 (SSEDAAELEA…LREEVDRLGQ (78 aa)) adopt a coiled-coil conformation. Residue 300–305 (GCGKTL) coordinates ATP. Lys595 participates in a covalent cross-link: Isoglutamyl lysine isopeptide (Lys-Gln) (interchain with Q-Cter in protein Pup). A docks into pockets in the proteasome alpha-ring region spans residues 612-613 (YL).

Belongs to the AAA ATPase family. As to quaternary structure, homohexamer. Assembles into a hexameric ring structure that caps the 20S proteasome core. Strongly interacts with the prokaryotic ubiquitin-like protein Pup through a hydrophobic interface; the interacting region of ARC lies in its N-terminal coiled-coil domain. There is one Pup binding site per ARC hexamer ring. Upon ATP-binding, the C-terminus of ARC interacts with the alpha-rings of the proteasome core, possibly by binding to the intersubunit pockets.

Its pathway is protein degradation; proteasomal Pup-dependent pathway. Functionally, ATPase which is responsible for recognizing, binding, unfolding and translocation of pupylated proteins into the bacterial 20S proteasome core particle. May be essential for opening the gate of the 20S proteasome via an interaction with its C-terminus, thereby allowing substrate entry and access to the site of proteolysis. Thus, the C-termini of the proteasomal ATPase may function like a 'key in a lock' to induce gate opening and therefore regulate proteolysis. This is Proteasome-associated ATPase from Mycolicibacterium smegmatis (strain ATCC 700084 / mc(2)155) (Mycobacterium smegmatis).